The chain runs to 474 residues: Calcitonin receptor (474 aa).

Positions 1-24 (MRFTFTSRCLALFLLLNHPTPILP) are cleaved as a signal peptide. The Extracellular portion of the chain corresponds to 25-146 (AFSNQTYPTI…FTPEKLKNAY (122 aa)). 4 N-linked (GlcNAc...) asparagine glycosylation sites follow: Asn28, Asn73, Asn125, and Asn130. Intrachain disulfides connect Cys55–Cys81, Cys72–Cys112, and Cys95–Cys134. A helical transmembrane segment spans residues 147-169 (VLYYLAIVGHSLSIFTLVISLGI). Topologically, residues 170–181 (FVFFRSLGCQRV) are cytoplasmic. A helical membrane pass occupies residues 182-202 (TLHKNMFLTYILNSMIIIIHL). Residues 203-219 (VEVVPNGELVRRDPVSC) lie on the Extracellular side of the membrane. Cys219 and Cys289 form a disulfide bridge. The chain crosses the membrane as a helical span at residues 220–242 (KILHFFHQYMMACNYFWMLCEGI). At 243–259 (YLHTLIVVAVFTEKQRL) the chain is on the cytoplasmic side. Residues 260-280 (RWYYLLGWGFPLVPTTIHAIT) form a helical membrane-spanning segment. Over 281-296 (RAVYFNDNCWLSVETH) the chain is Extracellular. The chain crosses the membrane as a helical span at residues 297–320 (LLYIIHGPVMAALVVNFFFLLNIV). Residues 321–340 (RVLVTKMRETHEAESHMYLK) are Cytoplasmic-facing. A helical membrane pass occupies residues 341–359 (AVKATMILVPLLGIQFVVF). The Extracellular segment spans residues 360 to 367 (PWRPSNKM). The helical transmembrane segment at 368 to 394 (LGKIYDYVMHSLIHFQGFFVATIYCFC) threads the bilayer. At 395 to 474 (NNEVQTTVKR…LNIIEQESSA (80 aa)) the chain is on the cytoplasmic side.

It belongs to the G-protein coupled receptor 2 family. As to quaternary structure, heterodimer of CALCR and RAMP1, RAMP2 or RAMP3; the receptor complexes function as AMYR1, AMYR2 and AMYR3 receptors, respectively, and respond to amylin/IAPP, calcitonin/CT and CGRP1 ligands. Interacts with GPRASP2.

Its subcellular location is the cell membrane. Its activity is regulated as follows. Sensitive to cholera toxin. Functionally, g protein-coupled receptor activated by ligand peptides amylin (IAPP), calcitonin (CT/CALCA) and calcitonin gene-related peptide type 1 (CGRP1/CALCA). CALCR interacts with receptor-activity-modifying proteins RAMP1, 2 and 3 to form receptor complexes AMYR1, 2 and 3, respectively. IAPP, CT and CGRP1 activate CALCR and AMYRs with distinct modes of receptor activation resulting in specific phenotypes. Ligand binding causes a conformation change that triggers signaling via guanine nucleotide-binding proteins (G proteins) and modulates the activity of downstream effectors. Activates cAMP-dependent pathway. In terms of biological role, non-functional protein. Unable to couple to G proteins and activate adenylyl cyclase. Does not undergo receptor internalization following ligand binding. This chain is Calcitonin receptor, found in Homo sapiens (Human).